A 218-amino-acid polypeptide reads, in one-letter code: Small ribosomal subunit protein uS7m (218 aa).

Residues 1–19 constitute a mitochondrion transit peptide; sequence MSLLGRIAEKTSRLSCLRL.

It belongs to the universal ribosomal protein uS7 family. In terms of assembly, component of the mitochondrial ribosome small subunit (28S) which comprises a 12S rRNA and about 30 distinct proteins.

It localises to the mitochondrion. This chain is Small ribosomal subunit protein uS7m (mRpS7), found in Drosophila melanogaster (Fruit fly).